Consider the following 279-residue polypeptide: Protease HtpX homolog (279 aa).

Transmembrane regions (helical) follow at residues 6 to 26 and 28 to 48; these read TVAL…MMGG and GGAL…YWFS. His127 is a Zn(2+) binding site. Glu128 is an active-site residue. Zn(2+) is bound at residue His131. The next 2 helical transmembrane spans lie at 137 to 157 and 177 to 197; these read ILIG…AHMA and LGLL…QMAI. Residue Glu202 participates in Zn(2+) binding.

Belongs to the peptidase M48B family. It depends on Zn(2+) as a cofactor.

It localises to the cell inner membrane. This is Protease HtpX homolog from Syntrophotalea carbinolica (strain DSM 2380 / NBRC 103641 / GraBd1) (Pelobacter carbinolicus).